A 460-amino-acid chain; its full sequence is Bifunctional protein GlmU (460 aa).

Residues 1–229 form a pyrophosphorylase region; it reads MTNYAIILAA…FNESLGVNDR (229 aa). UDP-N-acetyl-alpha-D-glucosamine is bound by residues 8 to 11, Lys22, Gln72, and 77 to 78; these read LAAG and GT. Residue Asp102 coordinates Mg(2+). UDP-N-acetyl-alpha-D-glucosamine contacts are provided by Gly139, Glu154, Asn169, and Asn227. Asn227 contacts Mg(2+). Residues 230–250 form a linker region; that stretch reads VALATAETVMRQRITQKHMVN. The N-acetyltransferase stretch occupies residues 251–460; sequence GVTFQNPETV…RLAHHPSRSK (210 aa). UDP-N-acetyl-alpha-D-glucosamine contacts are provided by Arg332 and Lys350. The Proton acceptor role is filled by His362. UDP-N-acetyl-alpha-D-glucosamine-binding residues include Tyr365 and Asn376. Acetyl-CoA-binding positions include Ala379, 385 to 386, Ser404, Ala422, and Arg439; that span reads NY.

The protein in the N-terminal section; belongs to the N-acetylglucosamine-1-phosphate uridyltransferase family. This sequence in the C-terminal section; belongs to the transferase hexapeptide repeat family. Homotrimer. It depends on Mg(2+) as a cofactor.

The protein resides in the cytoplasm. It catalyses the reaction alpha-D-glucosamine 1-phosphate + acetyl-CoA = N-acetyl-alpha-D-glucosamine 1-phosphate + CoA + H(+). The catalysed reaction is N-acetyl-alpha-D-glucosamine 1-phosphate + UTP + H(+) = UDP-N-acetyl-alpha-D-glucosamine + diphosphate. It functions in the pathway nucleotide-sugar biosynthesis; UDP-N-acetyl-alpha-D-glucosamine biosynthesis; N-acetyl-alpha-D-glucosamine 1-phosphate from alpha-D-glucosamine 6-phosphate (route II): step 2/2. It participates in nucleotide-sugar biosynthesis; UDP-N-acetyl-alpha-D-glucosamine biosynthesis; UDP-N-acetyl-alpha-D-glucosamine from N-acetyl-alpha-D-glucosamine 1-phosphate: step 1/1. Its pathway is bacterial outer membrane biogenesis; LPS lipid A biosynthesis. Functionally, catalyzes the last two sequential reactions in the de novo biosynthetic pathway for UDP-N-acetylglucosamine (UDP-GlcNAc). The C-terminal domain catalyzes the transfer of acetyl group from acetyl coenzyme A to glucosamine-1-phosphate (GlcN-1-P) to produce N-acetylglucosamine-1-phosphate (GlcNAc-1-P), which is converted into UDP-GlcNAc by the transfer of uridine 5-monophosphate (from uridine 5-triphosphate), a reaction catalyzed by the N-terminal domain. This chain is Bifunctional protein GlmU, found in Streptococcus pyogenes serotype M28 (strain MGAS6180).